A 130-amino-acid chain; its full sequence is Small ribosomal subunit protein uS11c (130 aa).

It belongs to the universal ribosomal protein uS11 family. Part of the 30S ribosomal subunit.

Its subcellular location is the plastid. The protein resides in the chloroplast. This Phaeodactylum tricornutum (strain CCAP 1055/1) protein is Small ribosomal subunit protein uS11c.